The primary structure comprises 412 residues: uncharacterized protein (412 aa).

In terms of domain architecture, UmuC spans 20 to 199; it reads FFYFDFDAFF…LPIVELPGIG (180 aa).

Belongs to the DNA polymerase type-Y family.

This is an uncharacterized protein from Mycoplasma pneumoniae (strain ATCC 29342 / M129 / Subtype 1) (Mycoplasmoides pneumoniae).